Here is a 359-residue protein sequence, read N- to C-terminus: Protein disulfide-isomerase C17H9.14c (359 aa).

The N-terminal stretch at 1 to 19 (MRLPLLSFVIFALFALVFA) is a signal peptide. 2 consecutive Thioredoxin domains span residues 20–130 (SGVV…EKTG) and 134–250 (RKIV…KKSG). Catalysis depends on nucleophile residues C51 and C54. Cystine bridges form between C51/C54 and C170/C173.

The protein belongs to the protein disulfide isomerase family.

It catalyses the reaction Catalyzes the rearrangement of -S-S- bonds in proteins.. Functionally, participates in the folding of proteins containing disulfide bonds, may be involved in glycosylation, prolyl hydroxylation and triglyceride transfer. The protein is Protein disulfide-isomerase C17H9.14c of Schizosaccharomyces pombe (strain 972 / ATCC 24843) (Fission yeast).